Here is a 266-residue protein sequence, read N- to C-terminus: Phosphate import ATP-binding protein PstB 2 (266 aa).

Residues 13-252 enclose the ABC transporter domain; the sequence is LEAQGVNVYY…GPTEEIFQNP (240 aa). Position 45–52 (45–52) interacts with ATP; the sequence is GPSGCGKS.

It belongs to the ABC transporter superfamily. Phosphate importer (TC 3.A.1.7) family. In terms of assembly, the complex is composed of two ATP-binding proteins (PstB), two transmembrane proteins (PstC and PstA) and a solute-binding protein (PstS).

Its subcellular location is the cell inner membrane. The catalysed reaction is phosphate(out) + ATP + H2O = ADP + 2 phosphate(in) + H(+). Its function is as follows. Part of the ABC transporter complex PstSACB involved in phosphate import. Responsible for energy coupling to the transport system. The chain is Phosphate import ATP-binding protein PstB 2 from Synechocystis sp. (strain ATCC 27184 / PCC 6803 / Kazusa).